A 77-amino-acid chain; its full sequence is Conodipine-M alpha chain (77 aa).

A Pyrrolidone carboxylic acid modification is found at Gln1. Residue His36 is part of the active site.

As to quaternary structure, heterodimer of an alpha and a beta chains; probably disulfide-linked. The cofactor is Ca(2+). As to expression, expressed by the venom duct.

It is found in the secreted. The enzyme catalyses a 1,2-diacyl-sn-glycero-3-phosphocholine + H2O = a 1-acyl-sn-glycero-3-phosphocholine + a fatty acid + H(+). With respect to regulation, inhibited by linoleoyl amide and MG14. Its function is as follows. Heterodimer: conodipine-M catalyzes the calcium-dependent hydrolysis of the 2-acyl groups in 3-sn-phosphoglycerides. This activity may be supported by the alpha chain. Conodipine-M inhibits the binding of isradipine (a ligand specific for L-type calcium channel) to L-type calcium channels. The sequence is that of Conodipine-M alpha chain from Conus magus (Magical cone).